A 617-amino-acid polypeptide reads, in one-letter code: Elongation factor 4 (617 aa).

In terms of domain architecture, tr-type G spans 17–203 (ERIRNFCIIA…RVCELVPHPV (187 aa)). Residues 29-34 (DHGKST) and 150-153 (NKID) contribute to the GTP site.

It belongs to the TRAFAC class translation factor GTPase superfamily. Classic translation factor GTPase family. LepA subfamily.

The protein resides in the cell membrane. It carries out the reaction GTP + H2O = GDP + phosphate + H(+). Required for accurate and efficient protein synthesis under certain stress conditions. May act as a fidelity factor of the translation reaction, by catalyzing a one-codon backward translocation of tRNAs on improperly translocated ribosomes. Back-translocation proceeds from a post-translocation (POST) complex to a pre-translocation (PRE) complex, thus giving elongation factor G a second chance to translocate the tRNAs correctly. Binds to ribosomes in a GTP-dependent manner. This Corynebacterium urealyticum (strain ATCC 43042 / DSM 7109) protein is Elongation factor 4.